A 592-amino-acid chain; its full sequence is Imidazole glycerol phosphate synthase hisHF, chloroplastic (592 aa).

Residues 1 to 55 constitute a chloroplast transit peptide; the sequence is MEATAAPFSSIVSSRQNFSSSSSIRASSPASLFLSQKSIGNVNRKFKSPRSLSVR. One can recognise a Glutamine amidotransferase type-1 domain in the interval 63–271; that stretch reads VVTLLDYGAG…LHPKLPATQK (209 aa). Catalysis depends on for GATase activity residues Cys-141, His-246, and Glu-248. Residues 280–592 form a cyclase region; it reads LAKRVIACLD…LQEERIEVRI (313 aa). Catalysis depends on residues Asp-289 and Asp-447.

It in the C-terminal section; belongs to the HisA/HisF family.

It is found in the plastid. Its subcellular location is the chloroplast. The catalysed reaction is 5-[(5-phospho-1-deoxy-D-ribulos-1-ylimino)methylamino]-1-(5-phospho-beta-D-ribosyl)imidazole-4-carboxamide + L-glutamine = D-erythro-1-(imidazol-4-yl)glycerol 3-phosphate + 5-amino-1-(5-phospho-beta-D-ribosyl)imidazole-4-carboxamide + L-glutamate + H(+). It carries out the reaction L-glutamine + H2O = L-glutamate + NH4(+). It functions in the pathway amino-acid biosynthesis; L-histidine biosynthesis; L-histidine from 5-phospho-alpha-D-ribose 1-diphosphate: step 5/9. In terms of biological role, IGPS catalyzes the conversion of PRFAR and glutamine to IGP, AICAR and glutamate. The glutaminase domain produces the ammonia necessary for the cyclase domain to produce IGP and AICAR from PRFAR. The ammonia is channeled to the active site of the cyclase domain. In Arabidopsis thaliana (Mouse-ear cress), this protein is Imidazole glycerol phosphate synthase hisHF, chloroplastic (HISN4).